The chain runs to 411 residues: Putative BMP-2-inducible kinase-like protein (411 aa).

Disordered stretches follow at residues 1–87 (MIAP…TQDI), 215–280 (SQQQ…RVSQ), and 392–411 (QQSQ…PSKQ). 2 stretches are compositionally biased toward basic and acidic residues: residues 8–18 (SSEEEGQKDEE) and 53–68 (EKRS…KAKY). The stretch at 47-71 (EDEEEEEKRSSDSDYEQAKAKYSDM) forms a coiled coil. 2 stretches are compositionally biased toward basic residues: residues 220–234 (VKQR…RQRR) and 243–258 (NGKR…KKTL).

The chain is Putative BMP-2-inducible kinase-like protein (BMP2KL) from Homo sapiens (Human).